The primary structure comprises 217 residues: Pyridoxine/pyridoxamine 5'-phosphate oxidase (217 aa).

Residues 66–71 (RMVLLK), 81–82 (FT), Arg-87, Lys-88, and Gln-110 each bind FMN. Lys-71 provides a ligand contact to substrate. The substrate site is built by Tyr-128, Arg-132, and Ser-136. FMN is bound by residues 145 to 146 (QS) and Trp-190. A substrate-binding site is contributed by 196–198 (RLH). Arg-200 is a binding site for FMN.

This sequence belongs to the pyridoxamine 5'-phosphate oxidase family. As to quaternary structure, homodimer. FMN is required as a cofactor.

It catalyses the reaction pyridoxamine 5'-phosphate + O2 + H2O = pyridoxal 5'-phosphate + H2O2 + NH4(+). The catalysed reaction is pyridoxine 5'-phosphate + O2 = pyridoxal 5'-phosphate + H2O2. The protein operates within cofactor metabolism; pyridoxal 5'-phosphate salvage; pyridoxal 5'-phosphate from pyridoxamine 5'-phosphate: step 1/1. It functions in the pathway cofactor metabolism; pyridoxal 5'-phosphate salvage; pyridoxal 5'-phosphate from pyridoxine 5'-phosphate: step 1/1. Its function is as follows. Catalyzes the oxidation of either pyridoxine 5'-phosphate (PNP) or pyridoxamine 5'-phosphate (PMP) into pyridoxal 5'-phosphate (PLP). The polypeptide is Pyridoxine/pyridoxamine 5'-phosphate oxidase (Colwellia psychrerythraea (strain 34H / ATCC BAA-681) (Vibrio psychroerythus)).